A 75-amino-acid polypeptide reads, in one-letter code: ATP synthase subunit c (75 aa).

Transmembrane regions (helical) follow at residues 12–32 (LASIGYGLAAIGSAIGVGIVV) and 49–69 (LTVLMYVGVAFTEALALIGIG).

It belongs to the ATPase C chain family. As to quaternary structure, F-type ATPases have 2 components, F(1) - the catalytic core - and F(0) - the membrane proton channel. F(1) has five subunits: alpha(3), beta(3), gamma(1), delta(1), epsilon(1). F(0) has three main subunits: a(1), b(2) and c(10-14). The alpha and beta chains form an alternating ring which encloses part of the gamma chain. F(1) is attached to F(0) by a central stalk formed by the gamma and epsilon chains, while a peripheral stalk is formed by the delta and b chains.

Its subcellular location is the cell membrane. F(1)F(0) ATP synthase produces ATP from ADP in the presence of a proton or sodium gradient. F-type ATPases consist of two structural domains, F(1) containing the extramembraneous catalytic core and F(0) containing the membrane proton channel, linked together by a central stalk and a peripheral stalk. During catalysis, ATP synthesis in the catalytic domain of F(1) is coupled via a rotary mechanism of the central stalk subunits to proton translocation. In terms of biological role, key component of the F(0) channel; it plays a direct role in translocation across the membrane. A homomeric c-ring of between 10-14 subunits forms the central stalk rotor element with the F(1) delta and epsilon subunits. In Tropheryma whipplei (strain TW08/27) (Whipple's bacillus), this protein is ATP synthase subunit c.